Consider the following 1234-residue polypeptide: Protein Jumonji (1234 aa).

A compositionally biased stretch (basic residues) spans 1–11 (MSKERPKRNII). Disordered regions lie at residues 1–22 (MSKERPKRNIIQKKYDDSDGIP), 68–150 (AKAL…LSKR), 169–339 (LPNS…VKYT), and 354–548 (RELV…GKSG). Position 78 is a phosphoserine (serine 78). A compositionally biased stretch (low complexity) spans 86 to 98 (SQVSSTSNDVSSS). The short motif at 104 to 110 (PSRKRPR) is the Nuclear localization signal element. A compositionally biased stretch (polar residues) spans 117–129 (FAQSQPNSPSTTP). A sufficient for interaction with the PRC2 complex region spans residues 141–170 (ATQISDLSKRKPKTEDFLTFLCLRGSPALP). Positions 180–193 (QDEEDVEEEDDETE) are enriched in acidic residues. Polar residues predominate over residues 197–210 (ATTNNASSSCQSTP). The segment covering 211–221 (RKGKTHKHVHN) has biased composition (basic residues). Basic and acidic residues predominate over residues 244-264 (KEATPGKEKHSEPRADSRREQ). A compositionally biased stretch (low complexity) spans 265 to 285 (ASGAQPTAASAAASSAKGLAA). Polar residues-rich tracts occupy residues 304 to 322 (SKVNGVTRMSSLGAGTNSA) and 369 to 384 (SAVNHTISGKTESSNA). At lysine 378 the chain carries N6-acetyllysine. Positions 418–440 (CTKEVGGRQLREGLRNSKRRLEE) are enriched in basic and acidic residues. Phosphoserine is present on serine 449. 2 stretches are compositionally biased toward basic and acidic residues: residues 482 to 494 (VKKEVPERSLERN) and 529 to 544 (SSHKPHDPQGKPEKGS). In terms of domain architecture, JmjN spans 555–596 (IPVLRPSAKEFHDPLIYIESVRAQVEKYGMCRVIPPPDWRPE). Positions 619 to 711 (WGPNVQRLAC…YLLSYDSLSP (93 aa)) constitute an ARID domain. Positions 872–876 (GSGFP) match the GSGFP motif motif. One can recognise a JmjC domain in the interval 882–1046 (PFSRHGWNLT…MGFETAKEMK (165 aa)). The tract at residues 1206–1234 (ENCLNKPTPKRGPRKRATVDVPPSRLPSS) is disordered.

It belongs to the JARID2 family. In terms of assembly, associates with the PRC2 complex, which consists of the core components EED, EZH1 or EZH2, SUZ12, and RBBP4, and various combinations of accessory subunits including AEBP2, JARID2, PHF19, MTF2 and EPOP. Found in a monomeric PRC2.2 (class 2) complex consisting of at least SUZ12, RBBP4, AEBP2 and JARID2. Facilitates nucleosome binding of the PRC2 complex. Interacts with SUZ12 (via C2H2-type zinc finger domain); the interaction is direct; competes with EPOP for SUZ12 binding. Interacts with histone methyltransferases EHMT1/GLP1 and EHMT2/G9a. Interacts with GATA4 (via the N-terminal region). Interacts with NKX2-5 (via the C-terminal region). Interacts with RB1. Interacts with ZNF496. Interacts with ESRRB. Interacts with DDX18; this interaction inhibits the PRC2 complex. In terms of tissue distribution, widely expressed in embryos. In adults, expressed at high levels in heart, skeletal muscle, brain and thymus.

It is found in the nucleus. In terms of biological role, regulator of histone methyltransferase complexes that plays an essential role in embryonic development, including heart and liver development, neural tube fusion process and hematopoiesis. Acts as an accessory subunit for the core PRC2 (Polycomb repressive complex 2) complex, which mediates histone H3K27 (H3K27me3) trimethylation on chromatin. Binds DNA and mediates the recruitment of the PRC2 complex to target genes in embryonic stem cells, thereby playing a key role in stem cell differentiation and normal embryonic development. In cardiac cells, it is required to repress expression of cyclin-D1 (CCND1) by activating methylation of 'Lys-9' of histone H3 (H3K9me) by the GLP1/EHMT1 and G9a/EHMT2 histone methyltransferases. Also acts as a transcriptional repressor of ANF via its interaction with GATA4 and NKX2-5. Participates in the negative regulation of cell proliferation signaling. Does not have histone demethylase activity. In Mus musculus (Mouse), this protein is Protein Jumonji (Jarid2).